Reading from the N-terminus, the 135-residue chain is Galectin-1 (135 aa).

An N-acetylalanine modification is found at A2. The region spanning 4 to 135 is the Galectin domain; the sequence is GLVASNLNLK…DFKIKCVAFD (132 aa). N6-acetyllysine is present on residues K13 and K29. S30 carries the phosphoserine modification. Residues 45–49, H53, N62, and 69–72 contribute to the a beta-D-galactoside site; these read HFNPR and WGAE. An N6-acetyllysine; alternate modification is found at K108. The residue at position 108 (K108) is an N6-succinyllysine; alternate. K128 bears the N6-acetyllysine mark.

Homodimer. Binds LGALS3BP. Interacts with CD2, CD3, CD4, CD6, CD7, CD43, ALCAM and CD45. Interacts with laminin (via poly-N-acetyllactosamine). Interacts with SUSD2. Interacts with cargo receptor TMED10; the interaction mediates the translocation from the cytoplasm into the ERGIC (endoplasmic reticulum-Golgi intermediate compartment) and thereby secretion. Post-translationally, the N-terminus is blocked.

It is found in the secreted. It localises to the extracellular space. The protein resides in the extracellular matrix. The protein localises to the cytoplasm. Lectin that binds beta-galactoside and a wide array of complex carbohydrates. Plays a role in regulating apoptosis, cell proliferation and cell differentiation. Inhibits CD45 protein phosphatase activity and therefore the dephosphorylation of Lyn kinase. Strong inducer of T-cell apoptosis. The polypeptide is Galectin-1 (Bubalus bubalis (Domestic water buffalo)).